Here is a 201-residue protein sequence, read N- to C-terminus: Ras-related protein Ral-a (201 aa).

18 to 25 (GSGGVGKS) is a binding site for GTP. The Effector region motif lies at 40–48 (YEPTKADSY). GTP is bound by residues 65-69 (DTAGQ) and 124-127 (NKCD). Cys198 carries the cysteine methyl ester modification. Residue Cys198 is the site of S-geranylgeranyl cysteine attachment. A propeptide spans 199-201 (TLL) (removed in mature form).

It belongs to the small GTPase superfamily. Ras family.

The protein localises to the cell membrane. It localises to the cleavage furrow. The protein resides in the midbody. It is found in the midbody ring. The enzyme catalyses GTP + H2O = GDP + phosphate + H(+). The protein is Ras-related protein Ral-a (Rala) of Drosophila melanogaster (Fruit fly).